A 692-amino-acid polypeptide reads, in one-letter code: MAREFSLAKTRNIGIMAHVDAGKTTTTERILYYTGKIHKIGETHEGASQMDWMEQEQERGITITSAATTAQWDGHRVNIIDTPGHVDFTIEVQRSLRVLDGAVTVLDSQSGVEPQTETVWRQATEYGVPRIVFANKMDKIGADFLYSVQTLHDRLQANAHPIQLPIGAEDDFRGIIDLIKMKAEIYTNDLGTDILEEDIPEEYLEQAQESREKLIEAVAETDEDLMMKYLEGEEITNDELIAGIRKATINVEFFPVLCGSAFKNKGVQLMLDAVIAYLPSPLDIPAIKGVNPDTDAEEERPASDEEPFAALAFKIMTDPFVGRLTFFRVYSGVLNSGSYVMNTSKGKRERIGRILQMHANSRQEIETVYAGDIAAAVGLKDTTTGDSLTDEKAKVILESIEVPEPVIQLMVEPKSKADQDKMGVALQKLAEEDPTFRVETNVETGETVIAGMGELHLDVLVDRMKREFKVEANVGAPQVSYRETFRASTQARGFFKRQSGGKGQFGDVWIEFTPNEEGKGFEFENAIVGGVVPREFIPAVEKGLIESMANGVLAGYPMVDVKAKLYDGSYHDVDSSETAFKIAASLALKEAAKSAQPAILEPMMLVTITAPEDNLGDVMGHVTARRGRVDGMEAHGNSQIVRAYVPLAEMFGYATVLRSATQGRGTFMMVFDHYEDVPKSVQEEIIKKTKGE.

The region spanning 8-282 (AKTRNIGIMA…AVIAYLPSPL (275 aa)) is the tr-type G domain. Residues 17–24 (AHVDAGKT), 81–85 (DTPGH), and 135–138 (NKMD) contribute to the GTP site.

It belongs to the TRAFAC class translation factor GTPase superfamily. Classic translation factor GTPase family. EF-G/EF-2 subfamily.

Its subcellular location is the cytoplasm. Functionally, catalyzes the GTP-dependent ribosomal translocation step during translation elongation. During this step, the ribosome changes from the pre-translocational (PRE) to the post-translocational (POST) state as the newly formed A-site-bound peptidyl-tRNA and P-site-bound deacylated tRNA move to the P and E sites, respectively. Catalyzes the coordinated movement of the two tRNA molecules, the mRNA and conformational changes in the ribosome. This is Elongation factor G from Streptococcus pyogenes serotype M49 (strain NZ131).